The chain runs to 572 residues: Linalool synthase TPS2, chloroplastic (572 aa).

The transit peptide at 1 to 27 directs the protein to the chloroplast; the sequence is EVEEPKTKISASTAEASSSRISSAKMT. Positions 1–45 are disordered; the sequence is EVEEPKTKISASTAEASSSRISSAKMTADGTIKLGDQSPLKQSEK. Over residues 8–28 the composition is skewed to low complexity; it reads KISASTAEASSSRISSAKMTA. 5 residues coordinate (2E)-geranyl diphosphate: R284, D321, D325, R462, and N465. The Mg(2+) site is built by D321 and D325. The DDXXD motif signature appears at 321–325; sequence DDVYD. N465, T469, and S473 together coordinate Mg(2+).

This sequence belongs to the terpene synthase family. Tpsb subfamily. As to quaternary structure, monomer. The cofactor is Mg(2+). Mn(2+) serves as cofactor. As to expression, expressed in flowers and fruits.

It localises to the plastid. Its subcellular location is the chloroplast. The catalysed reaction is (2E)-geranyl diphosphate = beta-myrcene + diphosphate. The enzyme catalyses (2E)-geranyl diphosphate + H2O = linalool + diphosphate. It carries out the reaction (2E)-geranyl diphosphate = (Z)-beta-ocimene + diphosphate. It catalyses the reaction (2E)-geranyl diphosphate = (E)-beta-ocimene + diphosphate. It functions in the pathway secondary metabolite biosynthesis; terpenoid biosynthesis. Functionally, monoterpene synthase (mono-TPS) involved in the biosynthesis of monoterpenes natural products, constituent of coffee beverage aroma. Catalyzes the conversion of (2E)-geranyl diphosphate (GPP) into linalool and beta-myrcene, and, as minor products, cis-ocimene and trans-ocimene. Not able to use geranylgeranyl pyrophosphate (GGPP) and farnesyl pyrophosphate (FPP) as substrates. The sequence is that of Linalool synthase TPS2, chloroplastic from Coffea arabica (Arabian coffee).